The chain runs to 75 residues: DNA-directed RNA polymerase subunit Rpo5 (75 aa).

Belongs to the archaeal Rpo5/eukaryotic RPB5 RNA polymerase subunit family. In terms of assembly, part of the RNA polymerase complex.

The protein resides in the cytoplasm. The catalysed reaction is RNA(n) + a ribonucleoside 5'-triphosphate = RNA(n+1) + diphosphate. In terms of biological role, DNA-dependent RNA polymerase (RNAP) catalyzes the transcription of DNA into RNA using the four ribonucleoside triphosphates as substrates. This is DNA-directed RNA polymerase subunit Rpo5 from Halobacterium salinarum (strain ATCC 700922 / JCM 11081 / NRC-1) (Halobacterium halobium).